The primary structure comprises 602 residues: MSRVKWRNEKIIVALGSLWILGFAAWAFLLFDLLGTSVKEGILEGPREGVFWTAAQYRNSFSRFERQLILYATRQDRDFDNVLLQLDSLEASFGFLERPSEVSAYWLSIPKARDDIAELSRFMATLRRDVPALGARAGDSRRVLEDVARHWPKVNALANYFRAIEMEQRDFTFHQLKEKRRAIVMLGGVLGVILGALFLLLFYTIRTRGSLLEQQQAALDAQRKASDRAFEMIAAKNAFLGMVSHELRTPLQAICGSIEVLLARPQSDANMKTIKRLQNSAASLEAQVKDLTDYIKLRSTNRSVQSDPVEIAPLLADVLDPLRGRIRDKHLNASLRVEPPDLVVKSDRKLIQQIASNLVENSIKYTNSGTIAISAELAGTPSNRTMQIAVRDTGVGIAKNLLSKIFEPFFRVNDPGVRHVDGIGMGLAVVQELVVALRGHVDVRSVVGEGSEFVVTLPVELPGSADAPDDDAPPSLQTTHRDLHALVVDDNENARETLGAMLTALGIRADLRGTGKEGLRCFGECQHDIVVLDLELPDISGFEVAEQIRWATSPDAAKKTTILGVSAYESAMLKGDHAVFDAFVPKPIHLDTLNGIVSRLRS.

Transmembrane regions (helical) follow at residues 11 to 31 (IIVA…FLLF) and 182 to 202 (AIVM…LLLF). Residues 242-461 (MVSHELRTPL…EFVVTLPVEL (220 aa)) enclose the Histidine kinase domain. Phosphohistidine; by autocatalysis is present on His-245. The 118-residue stretch at 484-601 (HALVVDDNEN…TLNGIVSRLR (118 aa)) folds into the Response regulatory domain. Asp-533 carries the 4-aspartylphosphate modification.

Its subcellular location is the cell inner membrane. The catalysed reaction is ATP + protein L-histidine = ADP + protein N-phospho-L-histidine.. In terms of biological role, member of a two-component regulatory system involved in control of gene expression; inhibits synthesis of (at least) the polyketide antibiotic thailandamide. Its two-component partner may be BTH_I0635. In Burkholderia thailandensis (strain ATCC 700388 / DSM 13276 / CCUG 48851 / CIP 106301 / E264), this protein is Sensor histidine kinase AtsR.